The primary structure comprises 282 residues: Bis(5'-nucleosyl)-tetraphosphatase, symmetrical (282 aa).

The protein belongs to the Ap4A hydrolase family.

The catalysed reaction is P(1),P(4)-bis(5'-adenosyl) tetraphosphate + H2O = 2 ADP + 2 H(+). Hydrolyzes diadenosine 5',5'''-P1,P4-tetraphosphate to yield ADP. The chain is Bis(5'-nucleosyl)-tetraphosphatase, symmetrical from Enterobacter sp. (strain 638).